Here is a 35-residue protein sequence, read N- to C-terminus: Photosystem II reaction center protein M (35 aa).

The chain crosses the membrane as a helical span at residues 7–27; it reads GFIATILFVLVPTVFLLILYI.

This sequence belongs to the PsbM family. As to quaternary structure, PSII is composed of 1 copy each of membrane proteins PsbA, PsbB, PsbC, PsbD, PsbE, PsbF, PsbH, PsbI, PsbJ, PsbK, PsbL, PsbM, PsbT, PsbX, PsbY, PsbZ, Psb30/Ycf12, peripheral proteins PsbO, CyanoQ (PsbQ), PsbU, PsbV and a large number of cofactors. It forms dimeric complexes.

It localises to the cellular thylakoid membrane. In terms of biological role, one of the components of the core complex of photosystem II (PSII). PSII is a light-driven water:plastoquinone oxidoreductase that uses light energy to abstract electrons from H(2)O, generating O(2) and a proton gradient subsequently used for ATP formation. It consists of a core antenna complex that captures photons, and an electron transfer chain that converts photonic excitation into a charge separation. This subunit is found at the monomer-monomer interface. The sequence is that of Photosystem II reaction center protein M from Crocosphaera subtropica (strain ATCC 51142 / BH68) (Cyanothece sp. (strain ATCC 51142)).